The primary structure comprises 619 residues: Transcription factor 7-like 2 (619 aa).

A compositionally biased stretch (gly residues) spans 1–11; that stretch reads MPQLNGGGGDD. Positions 1–53 are CTNNB1-binding; that stretch reads MPQLNGGGGDDLGANDELISFKDEGEQEEKSSENSSAERDLADVKSSLVNESE. The interval 1–96 is disordered; that stretch reads MPQLNGGGGD…AKRQDGGLFK (96 aa). The span at 19–43 shows a compositional bias: basic and acidic residues; that stretch reads ISFKDEGEQEEKSSENSSAERDLAD. Lys22 is covalently cross-linked (Glycyl lysine isopeptide (Lys-Gly) (interchain with G-Cter in SUMO2)). Residues 47–57 are compositionally biased toward polar residues; the sequence is SLVNESETNQN. Positions 63–91 are enriched in basic and acidic residues; that stretch reads EAERRPPPRSESFRDKSRESLEEAAKRQD. Thr201 and Thr212 each carry phosphothreonine; by NLK. Residues 201 to 395 form a mediates interaction with MAD2L2 region; the sequence is TPLITYSNEH…RRWHALSREE (195 aa). A compositionally biased stretch (polar residues) spans 318–328; that stretch reads TVKQESSQSDV. Disordered stretches follow at residues 318-350, 420-441, 496-547, and 574-619; these read TVKQ…KPHI, RDNY…TNEH, CLSP…AHLS, and DLPP…KSLE. Lys320 is covalently cross-linked (Glycyl lysine isopeptide (Lys-Gly) (interchain with G-Cter in SUMO)). Residues 335-346 show a composition bias toward basic and acidic residues; that stretch reads KHQDSKKEEEKK. The HMG box DNA-binding region spans 350 to 418; sequence IKKPLNAFML…LHMQLYPGWS (69 aa). The Nuclear localization signal motif lies at 425-430; sequence KKKKRK. The promoter-specific activation domain stretch occupies residues 459-505; the sequence is SAPKKCRARFGLDQQNNWCGPCRRKKKCVRYIQGEGSCLSPPSSDGS. The segment covering 496–508 has biased composition (low complexity); the sequence is CLSPPSSDGSLLD. A Glycyl lysine isopeptide (Lys-Gly) (interchain with G-Cter in SUMO2) cross-link involves residue Lys539. The segment covering 574–603 has biased composition (low complexity); it reads DLPPAALQPAAPSSSIAQPSTSSLHSHSSL. Residues 604-619 are compositionally biased toward polar residues; that stretch reads AGTQPQPLSLVTKSLE.

The protein belongs to the TCF/LEF family. Interacts with TGFB1I1. Interacts with CTNNB1 (via the armadillo repeat); forms stable transcription complex. Interacts with EP300. Interacts with NLK. Interacts with CCDC85B (probably through the HMG box); prevents interaction with CTNNB1. Interacts with TNIK. Interacts with MAD2L2; prevents TCF7L2/TCF4 binding to promZIPK/DAPK3oters, negatively modulating its transcriptional activity. Interacts with ZIPK/DAPK3. Interacts with XIAP/BIRC4 and TLE3. Interacts with DDIT3/CHOP. The CTNNB1 and TCF7L2/TCF4 complex interacts with PML (isoform PML-4). Identified in a complex with CTNNB1 and FERMT2. Interacts with SPIN1. Interacts with C11orf84/SPINDOC in a SPIN1-dependent manner. Interacts with DAZAP2; the interaction results in localization of DAZAP2 to the nucleus. In vitro, phosphorylated by TNIK. In terms of processing, phosphorylated at Thr-201 and/or Thr-212 by NLK. Phosphorylation by NLK at these sites inhibits DNA-binding by TCF7L2/TCF4, thereby preventing transcriptional activation of target genes of the canonical Wnt/beta-catenin signaling pathway. Post-translationally, polysumoylated. Sumoylation is enhanced by PIAS family members and desumoylation is enhanced by SENP2. Sumoylation/desumoylation regulates TCF7L2/TCF4 transcription activity in the Wnt/beta-catenin signaling pathway without altering interaction with CTNNB1 nor binding to DNA. In terms of tissue distribution, detected in epithelium from small intestine, with the highest expression at the top of the crypts and a gradient of expression from crypt to villus. Detected in colon epithelium and colon cancer, and in epithelium from mammary gland and carcinomas derived therefrom.

The protein localises to the nucleus. Its subcellular location is the PML body. In terms of biological role, participates in the Wnt signaling pathway and modulates MYC expression by binding to its promoter in a sequence-specific manner. Acts as a repressor in the absence of CTNNB1, and as activator in its presence. Activates transcription from promoters with several copies of the Tcf motif 5'-CCTTTGATC-3' in the presence of CTNNB1. TLE1, TLE2, TLE3 and TLE4 repress transactivation mediated by TCF7L2/TCF4 and CTNNB1. Expression of dominant-negative mutants results in cell-cycle arrest in G1. Necessary for the maintenance of the epithelial stem-cell compartment of the small intestine. The protein is Transcription factor 7-like 2 (TCF7L2) of Homo sapiens (Human).